Here is a 193-residue protein sequence, read N- to C-terminus: NADH-quinone oxidoreductase subunit B (193 aa).

Over residues 1–11 (MGLTGTNTTLV) the composition is skewed to polar residues. The segment at 1 to 23 (MGLTGTNTTLVAPQPKGILDPRT) is disordered. Residues Cys-72, Cys-73, Cys-137, and Cys-167 each coordinate [4Fe-4S] cluster.

The protein belongs to the complex I 20 kDa subunit family. NDH-1 is composed of 14 different subunits. Subunits NuoB, C, D, E, F, and G constitute the peripheral sector of the complex. The cofactor is [4Fe-4S] cluster.

It localises to the cell inner membrane. The catalysed reaction is a quinone + NADH + 5 H(+)(in) = a quinol + NAD(+) + 4 H(+)(out). Functionally, NDH-1 shuttles electrons from NADH, via FMN and iron-sulfur (Fe-S) centers, to quinones in the respiratory chain. Couples the redox reaction to proton translocation (for every two electrons transferred, four hydrogen ions are translocated across the cytoplasmic membrane), and thus conserves the redox energy in a proton gradient. The polypeptide is NADH-quinone oxidoreductase subunit B (Brucella canis (strain ATCC 23365 / NCTC 10854 / RM-666)).